Consider the following 585-residue polypeptide: Pyruvate kinase (585 aa).

R32 provides a ligand contact to substrate. Positions 34, 36, 66, and 67 each coordinate K(+). 34–37 (NFSH) contributes to the ATP binding site. The ATP site is built by R73 and K156. Residue E222 coordinates Mg(2+). Positions 245, 246, and 278 each coordinate substrate. Residue D246 coordinates Mg(2+).

Belongs to the pyruvate kinase family. It in the C-terminal section; belongs to the PEP-utilizing enzyme family. As to quaternary structure, homotetramer. Mg(2+) is required as a cofactor. Requires K(+) as cofactor.

It catalyses the reaction pyruvate + ATP = phosphoenolpyruvate + ADP + H(+). The protein operates within carbohydrate degradation; glycolysis; pyruvate from D-glyceraldehyde 3-phosphate: step 5/5. The polypeptide is Pyruvate kinase (pyk) (Bacillus licheniformis).